Here is a 554-residue protein sequence, read N- to C-terminus: MAIQHPDIQPAVNHSVQVAIAGAGPVGLMMANYLGQMGIDVLVVEKLDKLIDYPRAIGIDDEALRTMQSVGLVDDVLPHTTPWHAMRFLTPKGRCFADIQPMTDEFGWPRRNAFIQPQVDAVMLEGVSRFPNVRCLFSRELEAFSQQDDEVTLHLKTAEGQREIVKAQWLVACDGGASFVRRTLNVPFEGKTAPNQWIVVDIANDPLSTPHIYLCCDPVRPYVSAALPHAVRRFEFMVMPGETEEQLREPQNMRKLLSKVLPNPDNVELIRQRVYTHNARLAQRFRIDRVLLAGDAAHIMPVWQGQGYNSGMRDAFNLAWKLALVIQGKARDALLDTYQQERRDHAKAMIDLSVTAGNVLAPPKRWQGTLRDGVSWLLNYLPPVKRYFLEMRFKPMPQYYGGALVREGEAKHSPVGKMFIQPKVTLENGDVTLLDNAIGANFAVIGWGCNPLWGMSDEQIQQWRALGTRFIQVVPEVQIHTAQDNHDGVLRVGDTQGRLRSWFAQHNASLVVMRPDRFVAATAIPQTLGKTLNKLASVMTLTRPDADVSVEKVA.

Residues Q17–K46 and F285–D295 each bind FAD.

This sequence belongs to the PheA/TfdB FAD monooxygenase family. FAD is required as a cofactor.

The enzyme catalyses 3-(3-hydroxyphenyl)propanoate + NADH + O2 + H(+) = 3-(2,3-dihydroxyphenyl)propanoate + NAD(+) + H2O. It catalyses the reaction (2E)-3-(3-hydroxyphenyl)prop-2-enoate + NADH + O2 + H(+) = (2E)-3-(2,3-dihydroxyphenyl)prop-2-enoate + NAD(+) + H2O. It participates in aromatic compound metabolism; 3-phenylpropanoate degradation. Catalyzes the insertion of one atom of molecular oxygen into position 2 of the phenyl ring of 3-(3-hydroxyphenyl)propionate (3-HPP) and hydroxycinnamic acid (3HCI). This Escherichia coli (strain 55989 / EAEC) protein is 3-(3-hydroxy-phenyl)propionate/3-hydroxycinnamic acid hydroxylase.